Consider the following 548-residue polypeptide: 4-methyl-5-nitrocatechol 5-monooxygenase (548 aa).

It belongs to the PheA/TfdB FAD monooxygenase family. Monomer. The cofactor is FAD.

The enzyme catalyses 4-methyl-5-nitrocatechol + NADPH + O2 = 2-hydroxy-5-methylquinone + nitrite + NADP(+) + H2O + H(+). The catalysed reaction is 4-methyl-5-nitrocatechol + NADH + O2 = 2-hydroxy-5-methylquinone + nitrite + NAD(+) + H2O + H(+). Its activity is regulated as follows. Activated by magnesium or manganese ions. Inhibited by concentrations of 4-methyl-5-nitrocatechol (MNC) above 2 mM. In terms of biological role, involved in the degradation of 2,4-dinitrotoluene (2,4-DNT). Catalyzes the removal of the nitro group from 4-methyl-5-nitrocatechol (MNC) to yield 2-hydroxy-5-methylquinone. It can use both NADH and NADPH as electron donors, but prefers NADPH. Also able to use 4-nitrocatechol as substrate. The protein is 4-methyl-5-nitrocatechol 5-monooxygenase of Burkholderia sp.